The sequence spans 660 residues: MELPVCFYEERLRQQETEIKSLAAEIERLKNCGFVSETPSLEGLREENAKLKYRLNILRKSLLEEKKKSSKSMININAQIQEIFGTAIGAAYPELQNAPLAVTPSQQPKFGDYQCNSAMAITQMLKAMNQKVSPREIADKIVKNIPTNELVEKVDIAGPGFINVHLHKDFTSKQISKLLVNGVQPPVIWERKKVVVDFSSPNIAKEMHVGHLRSTVIGDSICRLFEFVGHDVLRLNHLGDWGTQFGMLIAHLQDKFPDYLTVSPPIGDLQSFYKESKKRFDEDEEFKKRAYQCVVQLQNKTPNFIQAWNLICDVSRKEFQKIYDCLDISIIDRGESFYQDRMIGVVKEFEEKGLVQVDEGRKVVFPPGCSVPLTIVKSDGGFTYDTSDLAALKQRLQEEKADMIIYVIDSGQAIHMQNVFSAGRMIGWYDPKVTRIEHAGFGVVLGEDKKKFKTRSGDTVRLIDLLDEGLKRSMEKLKDKGRDKVLTAEELLAAQTSVAFGCIKYADLSHNRMNDYIFSFDKMLDDRGNTAAYLLYAYTRIRSIARLANISDEDLHKAAKETEIILEHEKEWKLSKCILRFPEILQKILDDLLLHTLCDYLYELATTFTEFYDNCYCVEKDRQTGQIVKVNMSRLLLCDATAAVMAKGFDILGIKPVQKM.

A could be involved in the assembly of the multisynthetase complex region spans residues 1–72 (MELPVCFYEE…LEEKKKSSKS (72 aa)). L-arginine contacts are provided by residues 200 to 202 (SPN), histidine 211, tyrosine 384, aspartate 388, and glutamine 412. Positions 201-212 (PNIAKEMHVGHL) match the 'HIGH' region motif. Positions 529-543 (NTAAYLLYAYTRIRS) are interaction with tRNA.

This sequence belongs to the class-I aminoacyl-tRNA synthetase family. In terms of assembly, monomer; also part of a multisubunit complex that groups tRNA ligases for Arg, Asp, Glu, Gln, Ile, Leu, Lys, Met and Pro.

It localises to the cytoplasm. The protein localises to the cytosol. It catalyses the reaction tRNA(Arg) + L-arginine + ATP = L-arginyl-tRNA(Arg) + AMP + diphosphate. In terms of biological role, forms part of a macromolecular complex that catalyzes the attachment of specific amino acids to cognate tRNAs during protein synthesis. The protein is Arginine--tRNA ligase, cytoplasmic (rars1) of Xenopus tropicalis (Western clawed frog).